The primary structure comprises 117 residues: Holo-[acyl-carrier-protein] synthase (117 aa).

The Mg(2+) site is built by aspartate 8 and glutamate 57.

This sequence belongs to the P-Pant transferase superfamily. AcpS family. Mg(2+) serves as cofactor.

The protein localises to the cytoplasm. The catalysed reaction is apo-[ACP] + CoA = holo-[ACP] + adenosine 3',5'-bisphosphate + H(+). Transfers the 4'-phosphopantetheine moiety from coenzyme A to a Ser of acyl-carrier-protein. This chain is Holo-[acyl-carrier-protein] synthase, found in Limosilactobacillus reuteri (Lactobacillus reuteri).